We begin with the raw amino-acid sequence, 311 residues long: tRNA-cytidine(32) 2-sulfurtransferase (311 aa).

The PP-loop motif signature appears at 47–52 (SGGKDS). Residues C122, C125, and C213 each contribute to the [4Fe-4S] cluster site.

It belongs to the TtcA family. In terms of assembly, homodimer. Mg(2+) is required as a cofactor. It depends on [4Fe-4S] cluster as a cofactor.

It is found in the cytoplasm. The enzyme catalyses cytidine(32) in tRNA + S-sulfanyl-L-cysteinyl-[cysteine desulfurase] + AH2 + ATP = 2-thiocytidine(32) in tRNA + L-cysteinyl-[cysteine desulfurase] + A + AMP + diphosphate + H(+). The protein operates within tRNA modification. In terms of biological role, catalyzes the ATP-dependent 2-thiolation of cytidine in position 32 of tRNA, to form 2-thiocytidine (s(2)C32). The sulfur atoms are provided by the cysteine/cysteine desulfurase (IscS) system. This Escherichia coli O1:K1 / APEC protein is tRNA-cytidine(32) 2-sulfurtransferase.